Consider the following 250-residue polypeptide: 4-hydroxy-tetrahydrodipicolinate reductase (250 aa).

NAD(+) is bound by residues 10–15 (GAKGRI), 78–80 (GTT), and 105–108 (APNF). The active-site Proton donor/acceptor is the His-135. His-136 is a (S)-2,3,4,5-tetrahydrodipicolinate binding site. Lys-139 acts as the Proton donor in catalysis. 145 to 146 (GT) contributes to the (S)-2,3,4,5-tetrahydrodipicolinate binding site.

The protein belongs to the DapB family.

Its subcellular location is the cytoplasm. It catalyses the reaction (S)-2,3,4,5-tetrahydrodipicolinate + NAD(+) + H2O = (2S,4S)-4-hydroxy-2,3,4,5-tetrahydrodipicolinate + NADH + H(+). It carries out the reaction (S)-2,3,4,5-tetrahydrodipicolinate + NADP(+) + H2O = (2S,4S)-4-hydroxy-2,3,4,5-tetrahydrodipicolinate + NADPH + H(+). It participates in amino-acid biosynthesis; L-lysine biosynthesis via DAP pathway; (S)-tetrahydrodipicolinate from L-aspartate: step 4/4. Functionally, catalyzes the conversion of 4-hydroxy-tetrahydrodipicolinate (HTPA) to tetrahydrodipicolinate. The chain is 4-hydroxy-tetrahydrodipicolinate reductase from Streptomyces coelicolor (strain ATCC BAA-471 / A3(2) / M145).